A 540-amino-acid chain; its full sequence is Chaperonin GroEL 2 (540 aa).

ATP is bound by residues 29-32, K50, 86-90, G414, and D496; these read TMGP and DGTTT.

This sequence belongs to the chaperonin (HSP60) family. As to quaternary structure, forms a cylinder of 14 subunits composed of two heptameric rings stacked back-to-back. Interacts with the co-chaperonin GroES.

It is found in the cytoplasm. It carries out the reaction ATP + H2O + a folded polypeptide = ADP + phosphate + an unfolded polypeptide.. Together with its co-chaperonin GroES, plays an essential role in assisting protein folding. The GroEL-GroES system forms a nano-cage that allows encapsulation of the non-native substrate proteins and provides a physical environment optimized to promote and accelerate protein folding. This Rhodopirellula baltica (strain DSM 10527 / NCIMB 13988 / SH1) protein is Chaperonin GroEL 2.